A 261-amino-acid polypeptide reads, in one-letter code: UPF0328 protein ECU02_0020/ECU04_1700 (261 aa).

Positions 1 to 20 are disordered; it reads MSITSIPQPHETNEQHHTEI. The span at 11-20 shows a compositional bias: basic and acidic residues; the sequence is ETNEQHHTEI.

The protein belongs to the UPF0328 family.

The polypeptide is UPF0328 protein ECU02_0020/ECU04_1700 (Encephalitozoon cuniculi (strain GB-M1) (Microsporidian parasite)).